The primary structure comprises 671 residues: tRNA(Met) cytidine acetyltransferase TmcA (671 aa).

ATP is bound by residues Gln180, 202–211, and Arg319; that span reads GRGKSALAGQ. The N-acetyltransferase domain occupies 349 to 531; sequence IRFSAFTQAL…SGCYTAMALL (183 aa). Residues 461 to 463, 468 to 474, Glu499, and Arg506 contribute to the acetyl-CoA site; these read IAV and QREGIGQ.

Belongs to the RNA cytidine acetyltransferase family. TmcA subfamily.

The protein localises to the cytoplasm. The catalysed reaction is cytidine(34) in elongator tRNA(Met) + acetyl-CoA + ATP + H2O = N(4)-acetylcytidine(34) in elongator tRNA(Met) + ADP + phosphate + CoA + H(+). In terms of biological role, catalyzes the formation of N(4)-acetylcytidine (ac(4)C) at the wobble position of tRNA(Met), by using acetyl-CoA as an acetyl donor and ATP (or GTP). This is tRNA(Met) cytidine acetyltransferase TmcA from Citrobacter koseri (strain ATCC BAA-895 / CDC 4225-83 / SGSC4696).